Consider the following 395-residue polypeptide: Probable protein arginine N-methyltransferase 6.2 (395 aa).

The span at 1-11 shows a compositional bias: gly residues; sequence MFAGGADGGNG. The segment at 1-37 is disordered; it reads MFAGGADGGNGHLPRPRRARRGGGGGGGMGSPPLGPP. The SAM-dependent MTase PRMT-type domain maps to 45 to 390; the sequence is DMAYFKAYSH…YFTRDQWYVK (346 aa). S-adenosyl-L-methionine is bound by residues His-58, Arg-67, Gly-91, Asp-113, and Glu-142. Active-site residues include Glu-156 and Glu-165. The tract at residues 300-324 is disordered; sequence KKQANQCLDGNTQDASPSNKKKKAD. The span at 302 to 317 shows a compositional bias: polar residues; that stretch reads QANQCLDGNTQDASPS.

It belongs to the class I-like SAM-binding methyltransferase superfamily. Protein arginine N-methyltransferase family. PRMT6 subfamily.

Arginine methyltransferase that can both catalyze the formation of omega-N monomethylarginine (MMA) and asymmetrical dimethylarginine (aDMA). The chain is Probable protein arginine N-methyltransferase 6.2 (PRMT6.2) from Oryza sativa subsp. indica (Rice).